Consider the following 629-residue polypeptide: tRNA uridine 5-carboxymethylaminomethyl modification enzyme MnmG (629 aa).

FAD is bound by residues 14–19 (GAGHAG), Val126, and Ser181. 273-287 (GPRYCPSIEDKVVRF) contributes to the NAD(+) binding site. Gln370 provides a ligand contact to FAD.

The protein belongs to the MnmG family. As to quaternary structure, homodimer. Heterotetramer of two MnmE and two MnmG subunits. FAD is required as a cofactor.

It localises to the cytoplasm. In terms of biological role, NAD-binding protein involved in the addition of a carboxymethylaminomethyl (cmnm) group at the wobble position (U34) of certain tRNAs, forming tRNA-cmnm(5)s(2)U34. This Geobacillus thermodenitrificans (strain NG80-2) protein is tRNA uridine 5-carboxymethylaminomethyl modification enzyme MnmG.